Consider the following 185-residue polypeptide: Transcription termination/antitermination protein NusG (185 aa).

One can recognise a KOW domain in the interval 133 to 161; the sequence is PGEEVRVTEGPFADFNGTVEEVDYEKGRL.

This sequence belongs to the NusG family.

Participates in transcription elongation, termination and antitermination. This is Transcription termination/antitermination protein NusG from Haemophilus influenzae (strain ATCC 51907 / DSM 11121 / KW20 / Rd).